Consider the following 327-residue polypeptide: Geranylgeranyl transferase type-2 subunit alpha (327 aa).

PFTA repeat units lie at residues 44 to 78 (YSIE…SLAS), 84 to 118 (FWDK…HYPT), 123 to 157 (VWQT…NIES), 163 to 197 (LDKE…RMFQ), and 207 to 241 (YIRT…NDIV).

The protein belongs to the protein prenyltransferase subunit alpha family. In terms of assembly, heterodimer of an alpha and a beta subunit.

It catalyses the reaction geranylgeranyl diphosphate + L-cysteinyl-[protein] = S-geranylgeranyl-L-cysteinyl-[protein] + diphosphate. In terms of biological role, catalyzes the transfer of a geranyl-geranyl moiety from geranyl-geranyl pyrophosphate to proteins having the C-terminal -XCC or -XCXC, where both cysteines may become modified. Acts on YPT1 and SEC4. In Saccharomyces cerevisiae (strain ATCC 204508 / S288c) (Baker's yeast), this protein is Geranylgeranyl transferase type-2 subunit alpha (BET4).